The sequence spans 175 residues: Probable DNA-directed RNA polymerase subunit delta (175 aa).

The HTH HARE-type domain occupies 14 to 81 (CSMIEVVHSV…GENRWGLRSW (68 aa)). Positions 91 to 175 (ILPQPKPKKK…DETEEEEEEL (85 aa)) are disordered. Residues 106–175 (DGFDDYIEED…DETEEEEEEL (70 aa)) show a composition bias toward acidic residues.

Belongs to the RpoE family. RNAP is composed of a core of 2 alpha, a beta and a beta' subunits. The core is associated with a delta subunit and one of several sigma factors.

Its function is as follows. Participates in both the initiation and recycling phases of transcription. In the presence of the delta subunit, RNAP displays an increased specificity of transcription, a decreased affinity for nucleic acids, and an increased efficiency of RNA synthesis because of enhanced recycling. This Bacillus anthracis protein is Probable DNA-directed RNA polymerase subunit delta.